We begin with the raw amino-acid sequence, 404 residues long: MQLKAFSVSEVTEYIKKVMDNDIILRNVRVRGEISNLKYHSTAVYFTLKDEGAALKCVMFNDYSRSLEFTLQDGMSVIATGRITVYEKGGLYQLYVQSVQMDGIGALYIAFNKLKEKLQKEGLFDLDKKKPIPKHPRKIAVVTSPTGAVIRDIITISRRRNPTVDIMVVPVLVQGSSAADEISNALRILNKRKDIDVIIVARGGGSLEEIWPFNEEKVARSIFASRIPVVSAVGHETDFTIADFVADLRAPTPSAAAELVVPDIKVYQRELFLLKTKIMNLMKAQVLHSKKEFEGLKRALYLNNPIKKNEVLKQRVKNLKKSLTKEMLSIFNQKKNELLVLNEKLDSLSPLKVLTRGYTIVLNKEGQVITSSRKVKTSEEVGILFSDGRATAVVKEVKEDGERI.

It belongs to the XseA family. In terms of assembly, heterooligomer composed of large and small subunits.

The protein resides in the cytoplasm. It carries out the reaction Exonucleolytic cleavage in either 5'- to 3'- or 3'- to 5'-direction to yield nucleoside 5'-phosphates.. In terms of biological role, bidirectionally degrades single-stranded DNA into large acid-insoluble oligonucleotides, which are then degraded further into small acid-soluble oligonucleotides. The polypeptide is Exodeoxyribonuclease 7 large subunit (Caldanaerobacter subterraneus subsp. tengcongensis (strain DSM 15242 / JCM 11007 / NBRC 100824 / MB4) (Thermoanaerobacter tengcongensis)).